The following is a 519-amino-acid chain: MIPDVSHALTWLEAHPKALKGIRRGIERETLRVTADGHLASTGHPESLGAALTHQWITTDFAEALLEFITPVDGDIDHLLTFLRDIHRYTARKLGDERMWPLSMPCFIEAEQDIELAKYGSSNIGRFKTLYREGLKNRYGALMQTISGVHYNFSLPLEFWQAWAGVTDEQSGKEEISAGYFRLIRNYYRFGWVIPYLFGASPAICSSFLQGRETALPFERNGKGMCYLPYATSLRLSDLGYTNKSQSNLGITFNDLHTYVDALKRAIQTPSEEYVALGLKDGDRHLQLNTNVLQIENELYAPIRPKRVTRAGESPSDALLRGGIEYIEVRSLDINPFSPIGVDAVQARFLDLFLIWCVLADAPEMSSDELLCTRKNWDRVILEGRKPGQTIGIGCSDSRQPLETVGKALFADLRRVAEVLDGSESASYQQVCDELVASFDDPELTFSARILKVMQEKGIGGVGLELAEHYREMLQNEPLELLTEEQLSAERDASRQRQHELELKDKLSFEEYLALHGGQ.

Belongs to the glutamate--cysteine ligase type 1 family. Type 1 subfamily.

The enzyme catalyses L-cysteine + L-glutamate + ATP = gamma-L-glutamyl-L-cysteine + ADP + phosphate + H(+). It participates in sulfur metabolism; glutathione biosynthesis; glutathione from L-cysteine and L-glutamate: step 1/2. This is Glutamate--cysteine ligase from Yersinia pseudotuberculosis serotype I (strain IP32953).